We begin with the raw amino-acid sequence, 510 residues long: NAD(P)H-quinone oxidoreductase subunit 2 A, chloroplastic (510 aa).

13 helical membrane-spanning segments follow: residues 24-44 (LLLFDGSLIFPECILIFGLIL), 57-77 (IPWLYFISSTSLVMSITALLF), 99-119 (IFQFLILLCSTLCIPLSVEYI), 124-144 (MAITEFLLFVLTATLGGMFLC), 149-169 (LITIFVAPECFSLCSYLLSGY), 183-203 (YLLMGGASSSILVHGFSWLYG), 227-247 (PGISIALIFITVGIGFKLSPA), 295-315 (WHLLLEILAILSMILGNLIAI), 323-343 (MLAYSSIGQIGYVIIGIIVGD), 354-374 (YMLFYISMNLGTFACIVLFGL), 395-415 (ALSLALCLLSLGGLPPLAGFF), 418-438 (LYLFWCGWQAGLYFLVLIGLL), and 484-504 (MIVCVIASTIPGISMNPIIAI).

Belongs to the complex I subunit 2 family. In terms of assembly, NDH is composed of at least 16 different subunits, 5 of which are encoded in the nucleus.

It is found in the plastid. It localises to the chloroplast thylakoid membrane. The enzyme catalyses a plastoquinone + NADH + (n+1) H(+)(in) = a plastoquinol + NAD(+) + n H(+)(out). The catalysed reaction is a plastoquinone + NADPH + (n+1) H(+)(in) = a plastoquinol + NADP(+) + n H(+)(out). NDH shuttles electrons from NAD(P)H:plastoquinone, via FMN and iron-sulfur (Fe-S) centers, to quinones in the photosynthetic chain and possibly in a chloroplast respiratory chain. The immediate electron acceptor for the enzyme in this species is believed to be plastoquinone. Couples the redox reaction to proton translocation, and thus conserves the redox energy in a proton gradient. The sequence is that of NAD(P)H-quinone oxidoreductase subunit 2 A, chloroplastic from Solanum bulbocastanum (Wild potato).